A 302-amino-acid polypeptide reads, in one-letter code: Glutaminase (302 aa).

Substrate contacts are provided by S61, N111, E155, N162, Y186, Y238, and V256.

The protein belongs to the glutaminase family. In terms of assembly, homotetramer.

It carries out the reaction L-glutamine + H2O = L-glutamate + NH4(+). This chain is Glutaminase, found in Pseudomonas savastanoi pv. phaseolicola (strain 1448A / Race 6) (Pseudomonas syringae pv. phaseolicola (strain 1448A / Race 6)).